Here is a 217-residue protein sequence, read N- to C-terminus: Somatotropin (217 aa).

Positions 1-26 (MMAAGPRTSLLLAFALLCLPWTQVVG) are cleaved as a signal peptide. Residue His46 participates in Zn(2+) binding. Cys79 and Cys190 are joined by a disulfide. Phosphoserine is present on Ser132. Glu199 is a Zn(2+) binding site. The cysteines at positions 207 and 215 are disulfide-linked.

This sequence belongs to the somatotropin/prolactin family.

Its subcellular location is the secreted. Functionally, plays an important role in growth control. Its major role in stimulating body growth is to stimulate the liver and other tissues to secrete IGF1. It stimulates both the differentiation and proliferation of myoblasts. It also stimulates amino acid uptake and protein synthesis in muscle and other tissues. The chain is Somatotropin (GH1) from Bos mutus grunniens (Wild yak).